We begin with the raw amino-acid sequence, 133 residues long: Fatty acid-binding protein, heart (133 aa).

Ala2 carries the post-translational modification N-acetylalanine. Thr8 carries the phosphothreonine modification. The residue at position 20 (Tyr20) is a Phosphotyrosine; by Tyr-kinases. Position 23 is a phosphoserine (Ser23). Position 30 is a phosphothreonine (Thr30). Ser83 carries the post-translational modification Phosphoserine. Residue 127-129 (RTY) participates in (9Z)-octadecenoate binding. Hexadecanoate is bound at residue 127 to 129 (RTY). 127 to 129 (RTY) contributes to the octadecanoate binding site.

It belongs to the calycin superfamily. Fatty-acid binding protein (FABP) family.

Its subcellular location is the cytoplasm. Functionally, FABPs are thought to play a role in the intracellular transport of long-chain fatty acids and their acyl-CoA esters. The chain is Fatty acid-binding protein, heart (Fabp3) from Mus musculus (Mouse).